The following is a 141-amino-acid chain: Cytochrome c-type biogenesis protein CcmE (141 aa).

Residues 1–7 are Cytoplasmic-facing; it reads MRARTRR. The chain crosses the membrane as a helical; Signal-anchor for type II membrane protein span at residues 8–28; that stretch reads LYTFGIAAALIVAAAALAFFA. The Periplasmic segment spans residues 29 to 141; the sequence is LRENANLFYT…RELKPLEAGG (113 aa). The heme site is built by H125 and Y129.

Belongs to the CcmE/CycJ family.

Its subcellular location is the cell inner membrane. Functionally, heme chaperone required for the biogenesis of c-type cytochromes. Transiently binds heme delivered by CcmC and transfers the heme to apo-cytochromes in a process facilitated by CcmF and CcmH. This is Cytochrome c-type biogenesis protein CcmE from Hyphomonas neptunium (strain ATCC 15444).